The primary structure comprises 148 residues: Single-stranded DNA-binding protein, mitochondrial (148 aa).

The transit peptide at 1–16 (MFRRPVVQVLRQFVRH) directs the protein to the mitochondrion. Residues 30-141 (LNRVQLLGRV…IIADNIIFLS (112 aa)) enclose the SSB domain. Phosphoserine occurs at positions 67 and 79. At K113 the chain carries N6-acetyllysine. K122 carries the post-translational modification N6-succinyllysine.

As to quaternary structure, homotetramer. Interacts with MPG/AAG, through inhibition of its glycosylase activity it potentially prevents formation of DNA breaks in ssDNA, ensuring that base removal primarily occurs in dsDNA. Interacts with POLDIP2. Interacts with PRIMPOL.

Its subcellular location is the mitochondrion. It localises to the mitochondrion matrix. It is found in the mitochondrion nucleoid. Binds preferentially and cooperatively to pyrimidine rich single-stranded DNA (ss-DNA). In vitro, required to maintain the copy number of mitochondrial DNA (mtDNA) and plays a crucial role during mtDNA replication by stimulating the activity of the replisome components POLG and TWNK at the replication fork. Promotes the activity of the gamma complex polymerase POLG, largely by organizing the template DNA and eliminating secondary structures to favor ss-DNA conformations that facilitate POLG activity. In addition it is able to promote the 5'-3' unwinding activity of the mtDNA helicase TWNK. May also function in mtDNA repair. The chain is Single-stranded DNA-binding protein, mitochondrial (SSBP1) from Bos taurus (Bovine).